A 1094-amino-acid chain; its full sequence is Probable serine/threonine-protein kinase kinX (1094 aa).

A Protein kinase domain is found at 22 to 281 (LDFISEIGSG…QTLKQIKTTL (260 aa)). ATP is bound by residues 28-36 (IGSGGFGKV) and Lys49. The Proton acceptor role is filled by Asp146. 2 disordered regions span residues 301-884 (TTNG…SVED) and 946-1083 (IKVE…PNNK). The segment covering 330 to 344 (YDDDDDDDDDDDDND) has biased composition (acidic residues). The span at 351–373 (SDNSNSNVTLESNSNYNSSTING) shows a compositional bias: polar residues. The segment covering 374–387 (QEQQEQQEQQQQQQ) has biased composition (low complexity). Residues 393–408 (DEGEIEQDDDNIEVYD) show a composition bias toward acidic residues. The span at 410–424 (DYQKKLEEHQKELLE) shows a compositional bias: basic and acidic residues. 3 stretches are compositionally biased toward acidic residues: residues 433–454 (STDENEVYEQEEEEEEEDEEEQ), 480–496 (DDEDDDDDEEDEEEGDE), and 503–523 (DFDEDDEDDEEYDEDEDDEDE). 2 stretches are compositionally biased toward low complexity: residues 526–542 (IQYYQQQLQYQQQLQKQ) and 564–585 (RQLQQQQQQQQQQQQQQQQHQQ). Positions 587–602 (YDDDDDDDDEEEEEYD) are enriched in acidic residues. The segment covering 603–639 (DVIRHDTDSEEESKDKTPLPWDQHFEKQKESENKVEQ) has biased composition (basic and acidic residues). Over residues 650 to 661 (QETEQQQQQQQQ) the composition is skewed to low complexity. Positions 670–801 (PTKVEDVKVE…EPVEEVKVEE (132 aa)) are enriched in basic and acidic residues. A 40 X 9 AA approximate repeats of V-K-V-E-E-P-V-E-E region spans residues 676 to 978 (VKVETEEQTK…PVKVEVASPV (303 aa)). The span at 802-816 (PVEEVEAEESVQEPV) shows a compositional bias: acidic residues. 2 stretches are compositionally biased toward basic and acidic residues: residues 817–884 (EEVK…SVED) and 946–971 (IKVEEPIKVEEPIKVEEPIKVEEPVK). Low complexity-rich tracts occupy residues 972–985 (VEVASPVVQEQPPQ) and 992–1011 (VVSTSTITIASSPQQSSNSP). Residues 1016–1031 (VKQPQQQEIEVNSTPI) are compositionally biased toward polar residues. Residues 1032–1050 (KQQQQQQQTPTQQTQTPTK) are compositionally biased toward low complexity.

Belongs to the protein kinase superfamily. TKL Ser/Thr protein kinase family.

The enzyme catalyses L-seryl-[protein] + ATP = O-phospho-L-seryl-[protein] + ADP + H(+). It catalyses the reaction L-threonyl-[protein] + ATP = O-phospho-L-threonyl-[protein] + ADP + H(+). The chain is Probable serine/threonine-protein kinase kinX (kinX) from Dictyostelium discoideum (Social amoeba).